Here is a 509-residue protein sequence, read N- to C-terminus: MTTTKDNSGLAALFANSSGPRQKPQRAGKVDPVRDQQEDKMEVEDEEEDEEEDEEDEEEDEEDEEDEEEKEEDDDDDDDEEEIEEPVIKKSKKNKKSKEESADLEDQYMAKLAEEVAEEKPMVAETSAEEIKVDEPESDSEDEPELDVDEETKKKLEATNKELDKADYTIFVGNVSSEVITDKTVYNNFKALFAAIGTVASVRFRSISFSKLLPRKVAFISQQFHSKRDTVNAYIVFKNVKSVKGALTLNGSVFKGFHMRVDSVAHPGAQDHKRCVFVGALDFEEQEESLWEAFSSCGDVEYVRIVRDPKTNVGKGFAYVQFKDVNSVEQALLLNGKGINELSKSTTNKRKLRVSRAKSQHSQERAKQADMKNIRNAKTEGLSRDEKSHFGRAQSRLGKAGKAQLQSIVQEGLRAKKEDGKVNLARSKRRGVKPNKNRVEKPGQSRAEKRKAMFGTPTNGAPGAGGKKKRLTTRSQKFKQDGGVKKDGDAKKDGPKKERDGSKKGSKKN.

Residues 1–152 (MTTTKDNSGL…EPELDVDEET (152 aa)) are disordered. A compositionally biased stretch (basic and acidic residues) spans 28 to 40 (GKVDPVRDQQEDK). Positions 33-114 (VRDQQEDKME…EDQYMAKLAE (82 aa)) form a coiled coil. Over residues 41–85 (MEVEDEEEDEEEDEEDEEEDEEDEEDEEEKEEDDDDDDDEEEIEE) the composition is skewed to acidic residues. The segment covering 112 to 122 (LAEEVAEEKPM) has biased composition (basic and acidic residues). Residues 136–150 (PESDSEDEPELDVDE) show a composition bias toward acidic residues. RRM domains follow at residues 168 to 266 (YTIF…SVAH) and 274 to 359 (RCVF…RAKS). 2 disordered regions span residues 345-403 (STTN…AGKA) and 419-509 (DGKV…SKKN). Basic residues predominate over residues 347–359 (TNKRKLRVSRAKS). Residues 361-389 (HSQERAKQADMKNIRNAKTEGLSRDEKSH) show a composition bias toward basic and acidic residues. Residues 426–436 (RSKRRGVKPNK) are compositionally biased toward basic residues. Composition is skewed to basic and acidic residues over residues 437 to 451 (NRVEKPGQSRAEKRK) and 478 to 503 (FKQDGGVKKDGDAKKDGPKKERDGSK).

It belongs to the RRM RBM34 family.

The protein resides in the nucleus. It localises to the nucleolus. Its function is as follows. Involved in pre-25S rRNA processing. In Yarrowia lipolytica (strain CLIB 122 / E 150) (Yeast), this protein is Nucleolar protein 12 (NOP12).